Reading from the N-terminus, the 253-residue chain is Vitamin B12 import ATP-binding protein BtuD (253 aa).

Residues 3–237 (LDAKNLAMPP…EQLESTFATQ (235 aa)) enclose the ABC transporter domain. Position 31–38 (31–38 (GPNGSGKS)) interacts with ATP.

The protein belongs to the ABC transporter superfamily. Vitamin B12 importer (TC 3.A.1.13.1) family. As to quaternary structure, the complex is composed of two ATP-binding proteins (BtuD), two transmembrane proteins (BtuC) and a solute-binding protein (BtuF).

The protein resides in the cell inner membrane. It catalyses the reaction an R-cob(III)alamin(out) + ATP + H2O = an R-cob(III)alamin(in) + ADP + phosphate + H(+). Its function is as follows. Part of the ABC transporter complex BtuCDF involved in vitamin B12 import. Responsible for energy coupling to the transport system. The polypeptide is Vitamin B12 import ATP-binding protein BtuD (Photobacterium profundum (strain SS9)).